The chain runs to 512 residues: 23S rRNA (uracil(1939)-C(5))-methyltransferase RlmD (512 aa).

A compositionally biased stretch (low complexity) spans 1-14 (MQPTDSKTSTSDTT). Positions 1–45 (MQPTDSKTSTSDTTEQPNETQTITIPPSKKKSKPSSKTRRRLKDA) are disordered. Positions 15 to 25 (EQPNETQTITI) are enriched in polar residues. A compositionally biased stretch (basic residues) spans 28-42 (SKKKSKPSSKTRRRL). Positions 41–113 (RLKDAEPLPF…TSFEEGDAVN (73 aa)) constitute a TRAM domain. Cys-127, Cys-133, Cys-136, and Cys-215 together coordinate [4Fe-4S] cluster. Residues Gln-340, Phe-369, Asn-374, Glu-393, Asp-420, and Asp-441 each coordinate S-adenosyl-L-methionine. The active-site Nucleophile is the Cys-467.

It belongs to the class I-like SAM-binding methyltransferase superfamily. RNA M5U methyltransferase family. RlmD subfamily.

The catalysed reaction is uridine(1939) in 23S rRNA + S-adenosyl-L-methionine = 5-methyluridine(1939) in 23S rRNA + S-adenosyl-L-homocysteine + H(+). Catalyzes the formation of 5-methyl-uridine at position 1939 (m5U1939) in 23S rRNA. The sequence is that of 23S rRNA (uracil(1939)-C(5))-methyltransferase RlmD from Psychrobacter arcticus (strain DSM 17307 / VKM B-2377 / 273-4).